Here is a 701-residue protein sequence, read N- to C-terminus: UvrABC system protein B (701 aa).

In terms of domain architecture, Helicase ATP-binding spans 28–188 (RRIRAGERDV…VDVQYTRNDL (161 aa)). Position 41–48 (41–48 (GATGTGKS)) interacts with ATP. The Beta-hairpin signature appears at 94–117 (YYDYYQPEAYIAQTDTYIEKDSSI). Positions 432-598 (QIDDLIGEIR…PLRKKIADIL (167 aa)) constitute a Helicase C-terminal domain. Positions 606–636 (DDTEAAESVPIGGSGRNSSRGRRAQGEPGRA) are disordered. The UVR domain maps to 656 to 691 (ADLIKDLTSQMMVAARDLQFELAARFRDEIADLKKE).

Belongs to the UvrB family. As to quaternary structure, forms a heterotetramer with UvrA during the search for lesions. Interacts with UvrC in an incision complex.

The protein resides in the cytoplasm. Its function is as follows. The UvrABC repair system catalyzes the recognition and processing of DNA lesions. A damage recognition complex composed of 2 UvrA and 2 UvrB subunits scans DNA for abnormalities. Upon binding of the UvrA(2)B(2) complex to a putative damaged site, the DNA wraps around one UvrB monomer. DNA wrap is dependent on ATP binding by UvrB and probably causes local melting of the DNA helix, facilitating insertion of UvrB beta-hairpin between the DNA strands. Then UvrB probes one DNA strand for the presence of a lesion. If a lesion is found the UvrA subunits dissociate and the UvrB-DNA preincision complex is formed. This complex is subsequently bound by UvrC and the second UvrB is released. If no lesion is found, the DNA wraps around the other UvrB subunit that will check the other stand for damage. This chain is UvrABC system protein B, found in Mycobacterium ulcerans (strain Agy99).